Consider the following 519-residue polypeptide: 3-octaprenyl-4-hydroxybenzoate carboxy-lyase (519 aa).

Mn(2+) is bound at residue Asn-177. Prenylated FMN is bound by residues Ile-180 to Arg-182, Arg-194 to Leu-196, and Arg-199 to Gly-200. Glu-243 provides a ligand contact to Mn(2+). The Proton donor role is filled by Asp-318.

This sequence belongs to the UbiD family. As to quaternary structure, homohexamer. Prenylated FMN serves as cofactor. The cofactor is Mn(2+).

Its subcellular location is the cell membrane. It catalyses the reaction a 4-hydroxy-3-(all-trans-polyprenyl)benzoate + H(+) = a 2-(all-trans-polyprenyl)phenol + CO2. It functions in the pathway cofactor biosynthesis; ubiquinone biosynthesis. Its function is as follows. Catalyzes the decarboxylation of 3-octaprenyl-4-hydroxy benzoate to 2-octaprenylphenol, an intermediate step in ubiquinone biosynthesis. This is 3-octaprenyl-4-hydroxybenzoate carboxy-lyase from Burkholderia thailandensis (strain ATCC 700388 / DSM 13276 / CCUG 48851 / CIP 106301 / E264).